The following is a 305-amino-acid chain: Tyrosine recombinase XerC (305 aa).

In terms of domain architecture, Core-binding (CB) spans 4–95 (TSIQALINKW…AVKNFYRFLE (92 aa)). Residues 116 to 298 (LLPKALSEDD…SIKHLEAVYT (183 aa)) form the Tyr recombinase domain. Active-site residues include arginine 159, lysine 182, histidine 250, arginine 253, and histidine 276. The O-(3'-phospho-DNA)-tyrosine intermediate role is filled by tyrosine 285.

Belongs to the 'phage' integrase family. XerC subfamily. Forms a cyclic heterotetrameric complex composed of two molecules of XerC and two molecules of XerD.

It localises to the cytoplasm. Functionally, site-specific tyrosine recombinase, which acts by catalyzing the cutting and rejoining of the recombining DNA molecules. The XerC-XerD complex is essential to convert dimers of the bacterial chromosome into monomers to permit their segregation at cell division. It also contributes to the segregational stability of plasmids. In Rickettsia rickettsii (strain Iowa), this protein is Tyrosine recombinase XerC.